Consider the following 176-residue polypeptide: Ribosome maturation factor RimM (176 aa).

One can recognise a PRC barrel domain in the interval 93–166; it reads EGEYYHADLI…RVVIEMPGEI (74 aa).

The protein belongs to the RimM family. As to quaternary structure, binds ribosomal protein uS19.

The protein localises to the cytoplasm. Its function is as follows. An accessory protein needed during the final step in the assembly of 30S ribosomal subunit, possibly for assembly of the head region. Essential for efficient processing of 16S rRNA. May be needed both before and after RbfA during the maturation of 16S rRNA. It has affinity for free ribosomal 30S subunits but not for 70S ribosomes. The chain is Ribosome maturation factor RimM from Rhodopseudomonas palustris (strain BisA53).